Consider the following 124-residue polypeptide: uncharacterized protein (124 aa).

Residues 1-28 (MGTSLRSQSFREPRPSYGRLHESQGRSL) are disordered. The span at 9–28 (SFREPRPSYGRLHESQGRSL) shows a compositional bias: basic and acidic residues.

This is an uncharacterized protein from Mus musculus (Mouse).